The primary structure comprises 55 residues: Large ribosomal subunit protein bL33 (55 aa).

This sequence belongs to the bacterial ribosomal protein bL33 family.

The protein is Large ribosomal subunit protein bL33 of Acidothermus cellulolyticus (strain ATCC 43068 / DSM 8971 / 11B).